A 73-amino-acid chain; its full sequence is MSPLAWLLSLPVRAYRLIFSPWVGFNCRYDPTCSAYAMEALRKHGGVKGGWLTLRRILRCHPWGGTGVDDVPD.

This sequence belongs to the UPF0161 family.

The protein localises to the cell inner membrane. Could be involved in insertion of integral membrane proteins into the membrane. The sequence is that of Putative membrane protein insertion efficiency factor from Dinoroseobacter shibae (strain DSM 16493 / NCIMB 14021 / DFL 12).